The following is a 427-amino-acid chain: 3-phosphoshikimate 1-carboxyvinyltransferase (427 aa).

Positions 20, 21, and 25 each coordinate 3-phosphoshikimate. K20 lines the phosphoenolpyruvate pocket. Phosphoenolpyruvate is bound by residues G92 and R120. Residues S166, Q168, D312, and K339 each coordinate 3-phosphoshikimate. Q168 serves as a coordination point for phosphoenolpyruvate. The Proton acceptor role is filled by D312. Residues R343 and R385 each contribute to the phosphoenolpyruvate site.

The protein belongs to the EPSP synthase family. As to quaternary structure, monomer.

It localises to the cytoplasm. It carries out the reaction 3-phosphoshikimate + phosphoenolpyruvate = 5-O-(1-carboxyvinyl)-3-phosphoshikimate + phosphate. It participates in metabolic intermediate biosynthesis; chorismate biosynthesis; chorismate from D-erythrose 4-phosphate and phosphoenolpyruvate: step 6/7. Functionally, catalyzes the transfer of the enolpyruvyl moiety of phosphoenolpyruvate (PEP) to the 5-hydroxyl of shikimate-3-phosphate (S3P) to produce enolpyruvyl shikimate-3-phosphate and inorganic phosphate. This Streptococcus pneumoniae (strain 70585) protein is 3-phosphoshikimate 1-carboxyvinyltransferase.